The primary structure comprises 860 residues: Leucine--tRNA ligase (860 aa).

The 'HIGH' region motif lies at 42–52 (PYPSGRLHMGH). Residues 619–623 (KMSKS) carry the 'KMSKS' region motif. ATP is bound at residue K622.

It belongs to the class-I aminoacyl-tRNA synthetase family.

The protein localises to the cytoplasm. The enzyme catalyses tRNA(Leu) + L-leucine + ATP = L-leucyl-tRNA(Leu) + AMP + diphosphate. This chain is Leucine--tRNA ligase, found in Pasteurella multocida (strain Pm70).